Consider the following 439-residue polypeptide: Ornithine aminotransferase, mitochondrial (439 aa).

A mitochondrion; in hepatic form-targeting transit peptide spans 1–25; sequence MFSKLAHLQRFAVLSRGVHSSVASA. The transit peptide at 1–35 directs the protein to the mitochondrion; in renal form; that stretch reads MFSKLAHLQRFAVLSRGVHSSVASATSVATKKTVQ. K49 and K66 each carry N6-acetyllysine. K102 carries the N6-succinyllysine modification. K107 bears the N6-acetyllysine; alternate mark. Residue K107 is modified to N6-succinyllysine; alternate. K292 bears the N6-(pyridoxal phosphate)lysine mark. N6-acetyllysine; alternate is present on K362. K362 bears the N6-succinyllysine; alternate mark. K386 and K392 each carry N6-acetyllysine. N6-acetyllysine; alternate is present on K405. The residue at position 405 (K405) is an N6-succinyllysine; alternate. K421 is modified (N6-acetyllysine).

It belongs to the class-III pyridoxal-phosphate-dependent aminotransferase family. In terms of assembly, homohexamer. Pyridoxal 5'-phosphate serves as cofactor.

The protein localises to the mitochondrion matrix. The enzyme catalyses L-ornithine + 2-oxoglutarate = L-glutamate 5-semialdehyde + L-glutamate. Its pathway is amino-acid biosynthesis; L-proline biosynthesis; L-glutamate 5-semialdehyde from L-ornithine: step 1/1. In terms of biological role, catalyzes the reversible interconversion of L-ornithine and 2-oxoglutarate to L-glutamate semialdehyde and L-glutamate. This is Ornithine aminotransferase, mitochondrial (OAT) from Homo sapiens (Human).